The following is a 419-amino-acid chain: Protein indeterminate-domain 14 (419 aa).

The tract at residues methionine 1–serine 58 is disordered. 3 consecutive C2H2-type zinc fingers follow at residues tyrosine 70 to histidine 92, tyrosine 112 to histidine 142, and tryptophan 148 to histidine 175. 8 residues coordinate Zn(2+): cysteine 150, cysteine 153, histidine 166, cysteine 170, cysteine 177, cysteine 179, histidine 192, and cysteine 196. A CCHC-type 2; atypical zinc finger spans residues histidine 175–valine 198. Residues arginine 185 to threonine 197 form an SHR-binding region. Disordered regions lie at residues arginine 200–leucine 259 and serine 298–arginine 318. Composition is skewed to low complexity over residues glutamine 213–asparagine 230 and arginine 246–leucine 259. Positions glutamate 313 to alanine 349 form a coiled coil.

Homo- and heterodimer of IDD14alpha and IDD14beta. As to expression, expressed in cotyledons and the vasculature of reosette leaves. Weak expression in hypocotyls and floral organs, but not detected in roots and inflorescence stems.

The protein resides in the nucleus. Its function is as follows. Transcription factor regulating starch metabolism by binding directly to the promoter of QQS. The IDD14beta isoform attenuates the transcription factor activity by competitively forming heterodimers with reduced DNA-binding capacity. Regulates lateral organ morphogenesis and gravitropic responses. Has a redundant role with IDD16 in directing leaf and floral organ morphogenesis. Involved in the establishment of auxin gradients through the regulation of auxin biosynthesis and transport. The polypeptide is Protein indeterminate-domain 14 (Arabidopsis thaliana (Mouse-ear cress)).